The following is a 401-amino-acid chain: Formate-dependent phosphoribosylglycinamide formyltransferase (401 aa).

N(1)-(5-phospho-beta-D-ribosyl)glycinamide contacts are provided by residues 22–23 (EL) and E82. Residues R115, K157, 162-167 (SSGKGQ), 197-200 (EGFI), and E205 contribute to the ATP site. The 196-residue stretch at 120–315 (RLAAETLGLP…EFELHARAIL (196 aa)) folds into the ATP-grasp domain. Residues E274 and E286 each contribute to the Mg(2+) site. N(1)-(5-phospho-beta-D-ribosyl)glycinamide is bound by residues D293, K362, and 369–370 (RR).

Belongs to the PurK/PurT family. As to quaternary structure, homodimer.

The catalysed reaction is N(1)-(5-phospho-beta-D-ribosyl)glycinamide + formate + ATP = N(2)-formyl-N(1)-(5-phospho-beta-D-ribosyl)glycinamide + ADP + phosphate + H(+). It participates in purine metabolism; IMP biosynthesis via de novo pathway; N(2)-formyl-N(1)-(5-phospho-D-ribosyl)glycinamide from N(1)-(5-phospho-D-ribosyl)glycinamide (formate route): step 1/1. Involved in the de novo purine biosynthesis. Catalyzes the transfer of formate to 5-phospho-ribosyl-glycinamide (GAR), producing 5-phospho-ribosyl-N-formylglycinamide (FGAR). Formate is provided by PurU via hydrolysis of 10-formyl-tetrahydrofolate. This Cupriavidus pinatubonensis (strain JMP 134 / LMG 1197) (Cupriavidus necator (strain JMP 134)) protein is Formate-dependent phosphoribosylglycinamide formyltransferase.